The following is a 515-amino-acid chain: GMP synthase [glutamine-hydrolyzing] (515 aa).

Residues 6-198 (KVIIIDYGSQ…LFHVAKLKAD (193 aa)) enclose the Glutamine amidotransferase type-1 domain. C83 (nucleophile) is an active-site residue. Residues H172 and E174 contribute to the active site. Positions 199–390 (WTMSSFVERA…LGLPDFIIWR (192 aa)) constitute a GMPS ATP-PPase domain. 226–232 (SGGIDST) is an ATP binding site.

As to quaternary structure, homodimer.

The enzyme catalyses XMP + L-glutamine + ATP + H2O = GMP + L-glutamate + AMP + diphosphate + 2 H(+). Its pathway is purine metabolism; GMP biosynthesis; GMP from XMP (L-Gln route): step 1/1. Catalyzes the synthesis of GMP from XMP. The protein is GMP synthase [glutamine-hydrolyzing] of Nitratidesulfovibrio vulgaris (strain DP4) (Desulfovibrio vulgaris).